We begin with the raw amino-acid sequence, 237 residues long: Ras-related protein Rab-23 (237 aa).

Residues Val-20, Gly-21, Lys-22, Ser-23, Ser-24, Tyr-38, and Thr-41 each coordinate GTP. Ser-23 lines the Mg(2+) pocket. The Switch 1 signature appears at 28–46 (RYCKGIFTKDYKKTIGVDF). Mg(2+) contacts are provided by Thr-41 and Asp-64. The short motif at 65-84 (TAGQEEFDAITKAYYRGAQA) is the Switch 2 element. GTP contacts are provided by Gly-67, Asn-121, Lys-122, Asp-124, Ser-151, Val-152, and Lys-153. A phosphoserine mark is found at Ser-186 and Ser-187. Polar residues predominate over residues 188–208 (SNKIGVFNTSGGSHSGQNSGT). Residues 188–237 (SNKIGVFNTSGGSHSGQNSGTLNGGDVINLRPNKQRTKKNRNPFSSCSIP) are disordered. Cys-234 is modified (cysteine methyl ester). Cys-234 carries S-geranylgeranyl cysteine lipidation. Residues 235-237 (SIP) constitute a propeptide, removed in mature form.

Belongs to the small GTPase superfamily. Rab family. As to quaternary structure, interacts with SUFU. Mg(2+) serves as cofactor.

Its subcellular location is the cell membrane. It is found in the cytoplasm. It localises to the cytoplasmic vesicle. The protein localises to the autophagosome. The protein resides in the endosome membrane. Its subcellular location is the phagosome. It is found in the phagosome membrane. It carries out the reaction GTP + H2O = GDP + phosphate + H(+). With respect to regulation, regulated by guanine nucleotide exchange factors (GEFs) which promote the exchange of bound GDP for free GTP. Regulated by GTPase activating proteins (GAPs) which increase the GTP hydrolysis activity. Inhibited by GDP dissociation inhibitors (GDIs). In terms of biological role, the small GTPases Rab are key regulators of intracellular membrane trafficking, from the formation of transport vesicles to their fusion with membranes. Rabs cycle between an inactive GDP-bound form and an active GTP-bound form that is able to recruit to membranes different set of downstream effectors directly responsible for vesicle formation, movement, tethering and fusion. Together with SUFU, prevents nuclear import of GLI1, and thereby inhibits GLI1 transcription factor activity. Regulates GLI1 in differentiating chondrocytes. Likewise, regulates GLI3 proteolytic processing and modulates GLI2 and GLI3 transcription factor activity. Plays a role in autophagic vacuole assembly, and mediates defense against pathogens, such as S.aureus, by promoting their capture by autophagosomes that then merge with lysosomes. This chain is Ras-related protein Rab-23, found in Homo sapiens (Human).